The primary structure comprises 520 residues: MNTTVSNQTPRIRIFDTTLRDGEQSPGCSMTPQQKLVMARALDELGVDIIETGFPASSHSDREAVAMMGRELRRPTLAVLSRCLQADIETSAKALETAANPRLHVFLSTSPLHREHKLRMSREQVLESVHRHVTLARGYVDDVEFSAEDATRTEEDFLAEVTRVAIAAGATTINLPDTVGFTTPEEIRGMFSRLIASVEGADKVIFSAHCHNDLGLAVANSLAAIEGGARQVECTINGIGERAGNCALEEITMALKVRGAFYNIDSAINTPRIVSTSQLLQRLVGMPVQRNKAVVGGNAFAHESGIHQHGMLRHRGTYEIMRPEDVGWESSQMVLGRHSGRAAVEQRLRALGYLLEEEEVKLVFEQFKALCEKQRVVTDADLQALMQDATVQEGYRLASMTISDVGSRANALVELSDPEGNRVAETAQGNGPVDALFGALASATGVKLELDSYQVHSVGIGADARGEASLSVRHDGVEYEGTGTSKDIIEASALAWLDVANRLLRQRERGVVAGKTAAVA.

Residues 12–274 (IRIFDTTLRD…DSAINTPRIV (263 aa)) enclose the Pyruvate carboxyltransferase domain. Residues aspartate 21, histidine 209, histidine 211, and asparagine 245 each coordinate Mn(2+). A regulatory domain region spans residues 396 to 520 (RLASMTISDV…VVAGKTAAVA (125 aa)).

The protein belongs to the alpha-IPM synthase/homocitrate synthase family. LeuA type 1 subfamily. In terms of assembly, homodimer. Requires Mn(2+) as cofactor.

The protein resides in the cytoplasm. The enzyme catalyses 3-methyl-2-oxobutanoate + acetyl-CoA + H2O = (2S)-2-isopropylmalate + CoA + H(+). It participates in amino-acid biosynthesis; L-leucine biosynthesis; L-leucine from 3-methyl-2-oxobutanoate: step 1/4. Functionally, catalyzes the condensation of the acetyl group of acetyl-CoA with 3-methyl-2-oxobutanoate (2-ketoisovalerate) to form 3-carboxy-3-hydroxy-4-methylpentanoate (2-isopropylmalate). This chain is 2-isopropylmalate synthase, found in Xanthomonas axonopodis pv. citri (strain 306).